The following is a 207-amino-acid chain: NAD(P)H-quinone oxidoreductase subunit K, chloroplastic (207 aa).

Residues Cys-47, Cys-48, Cys-112, and Cys-143 each contribute to the [4Fe-4S] cluster site.

The protein belongs to the complex I 20 kDa subunit family. As to quaternary structure, NDH is composed of at least 16 different subunits, 5 of which are encoded in the nucleus. [4Fe-4S] cluster serves as cofactor.

It is found in the plastid. It localises to the chloroplast thylakoid membrane. The catalysed reaction is a plastoquinone + NADH + (n+1) H(+)(in) = a plastoquinol + NAD(+) + n H(+)(out). It catalyses the reaction a plastoquinone + NADPH + (n+1) H(+)(in) = a plastoquinol + NADP(+) + n H(+)(out). Functionally, NDH shuttles electrons from NAD(P)H:plastoquinone, via FMN and iron-sulfur (Fe-S) centers, to quinones in the photosynthetic chain and possibly in a chloroplast respiratory chain. The immediate electron acceptor for the enzyme in this species is believed to be plastoquinone. Couples the redox reaction to proton translocation, and thus conserves the redox energy in a proton gradient. The protein is NAD(P)H-quinone oxidoreductase subunit K, chloroplastic of Psilotum nudum (Whisk fern).